The sequence spans 288 residues: 4-hydroxybenzoate octaprenyltransferase (288 aa).

6 consecutive transmembrane segments (helical) span residues 20 to 40 (IGTL…AGGL), 43 to 63 (LKVF…GCII), 96 to 116 (LFVV…PLVV), 210 to 230 (QIIG…GMVA), 234 to 254 (AIYA…QKLI), and 262 to 282 (CFTA…ALML).

This sequence belongs to the UbiA prenyltransferase family. Mg(2+) is required as a cofactor.

Its subcellular location is the cell inner membrane. It catalyses the reaction all-trans-octaprenyl diphosphate + 4-hydroxybenzoate = 4-hydroxy-3-(all-trans-octaprenyl)benzoate + diphosphate. It participates in cofactor biosynthesis; ubiquinone biosynthesis. Catalyzes the prenylation of para-hydroxybenzoate (PHB) with an all-trans polyprenyl group. Mediates the second step in the final reaction sequence of ubiquinone-8 (UQ-8) biosynthesis, which is the condensation of the polyisoprenoid side chain with PHB, generating the first membrane-bound Q intermediate 3-octaprenyl-4-hydroxybenzoate. The polypeptide is 4-hydroxybenzoate octaprenyltransferase (Shewanella pealeana (strain ATCC 700345 / ANG-SQ1)).